The chain runs to 96 residues: UPF0298 protein LCA_1075 (96 aa).

It belongs to the UPF0298 family.

It is found in the cytoplasm. The sequence is that of UPF0298 protein LCA_1075 from Latilactobacillus sakei subsp. sakei (strain 23K) (Lactobacillus sakei subsp. sakei).